Reading from the N-terminus, the 488-residue chain is MKFKDLRDFVQQLEQRGELKRIQMPISPVLEMTEICDRTLRAKGPALLFENPVGFDIPVLGNLFGTPERVAMGMGAEAVTELREIGKLLAFLKEPEPPKGLKDAWSKLPIFRKVIAMAPKVVKDAPCQEIVIEGDDVDLGMLPVQTCWPGDVAPLITWGLTVTKGPNKERQNLGIYRQQVIGRNKIIMRWLSHRGGALDFRDWCVKHPGEPYPVAVALGADPATILGAVTPVPDSLSEYAFAGLLRGSRTELIKCRGSNLQVPASAEIVLEGVIHPGEMANEGPYGDHTGYYNEVDSFPVLTVERITHRIKPIYHSTYTGRPPDEPAILGVALNEVFVPILQKQFPEIVDFYLPPEGCSYRMAVVTIKKQYPGHAKRVMLGVWSFLRQFMYTKFVIVTDDDINARDWNDVIWAITTRMDPKRDTVMIDNTPIDYLDFASPVSGLGSKMGLDATNKWPGETTREWGRAIVKDEATTRRVDEIWTQLGID.

N172 contributes to the Mn(2+) binding site. Residues 175–177 (IYR), 189–191 (RWL), and 194–195 (RG) contribute to the prenylated FMN site. E238 contributes to the Mn(2+) binding site. D287 serves as the catalytic Proton donor.

It belongs to the UbiD family. As to quaternary structure, homohexamer. Prenylated FMN serves as cofactor. Mn(2+) is required as a cofactor.

The protein localises to the cell membrane. The enzyme catalyses a 4-hydroxy-3-(all-trans-polyprenyl)benzoate + H(+) = a 2-(all-trans-polyprenyl)phenol + CO2. It functions in the pathway cofactor biosynthesis; ubiquinone biosynthesis. Functionally, catalyzes the decarboxylation of 3-octaprenyl-4-hydroxy benzoate to 2-octaprenylphenol, an intermediate step in ubiquinone biosynthesis. The sequence is that of 3-octaprenyl-4-hydroxybenzoate carboxy-lyase from Pseudomonas syringae pv. tomato (strain ATCC BAA-871 / DC3000).